The chain runs to 389 residues: Acetylornithine aminotransferase (389 aa).

Residues 104-105 (GT) and Phe-131 each bind pyridoxal 5'-phosphate. Arg-134 is a binding site for N(2)-acetyl-L-ornithine. Pyridoxal 5'-phosphate is bound at residue 216 to 219 (DEVQ). The residue at position 245 (Lys-245) is an N6-(pyridoxal phosphate)lysine. Ser-273 lines the N(2)-acetyl-L-ornithine pocket. Thr-274 lines the pyridoxal 5'-phosphate pocket.

The protein belongs to the class-III pyridoxal-phosphate-dependent aminotransferase family. ArgD subfamily. In terms of assembly, homodimer. Pyridoxal 5'-phosphate serves as cofactor.

It is found in the cytoplasm. It carries out the reaction N(2)-acetyl-L-ornithine + 2-oxoglutarate = N-acetyl-L-glutamate 5-semialdehyde + L-glutamate. The protein operates within amino-acid biosynthesis; L-arginine biosynthesis; N(2)-acetyl-L-ornithine from L-glutamate: step 4/4. This is Acetylornithine aminotransferase from Methanopyrus kandleri (strain AV19 / DSM 6324 / JCM 9639 / NBRC 100938).